The following is a 410-amino-acid chain: Na(+)-translocating NADH-quinone reductase subunit B (410 aa).

3 helical membrane passes run 56 to 76 (MMIL…YNVG), 119 to 139 (LFGA…GGFW), and 159 to 179 (SILF…ALGI). An FMN phosphoryl threonine modification is found at Thr-232. The next 5 membrane-spanning stretches (helical) occupy residues 266–286 (GSIG…IVFA), 293–313 (IIAG…FIGS), 318–338 (MFAM…GMLF), 347–367 (SFTN…CVLI), and 377–397 (GMML…YFVA).

This sequence belongs to the NqrB/RnfD family. Composed of six subunits; NqrA, NqrB, NqrC, NqrD, NqrE and NqrF. FMN is required as a cofactor.

It is found in the cell inner membrane. The enzyme catalyses a ubiquinone + n Na(+)(in) + NADH + H(+) = a ubiquinol + n Na(+)(out) + NAD(+). NQR complex catalyzes the reduction of ubiquinone-1 to ubiquinol by two successive reactions, coupled with the transport of Na(+) ions from the cytoplasm to the periplasm. NqrA to NqrE are probably involved in the second step, the conversion of ubisemiquinone to ubiquinol. The protein is Na(+)-translocating NADH-quinone reductase subunit B of Neisseria meningitidis serogroup A / serotype 4A (strain DSM 15465 / Z2491).